The chain runs to 318 residues: Annexin D6 (318 aa).

Residue alanine 2 is modified to N-acetylalanine. Annexin repeat units follow at residues 11 to 82, 83 to 154, 168 to 239, and 243 to 314; these read PLPE…LWTL, DPTE…PLVS, KLAR…TAIK, and YPEK…ALLG. Positions 24, 26, 28, and 68 each coordinate Ca(2+). Serine 95 bears the Phosphoserine mark. Phosphothreonine is present on residues threonine 100 and threonine 112. At tyrosine 129 the chain carries Phosphotyrosine. Residues isoleucine 256, arginine 258, and glycine 260 each contribute to the Ca(2+) site. The residue at position 285 (tyrosine 285) is a Phosphotyrosine. The residue at position 290 (serine 290) is a Phosphoserine. Ca(2+)-binding residues include aspartate 300 and threonine 301.

Belongs to the annexin (TC 1.A.31.1) family. In terms of tissue distribution, expressed in flowers.

The protein is Annexin D6 (ANN6) of Arabidopsis thaliana (Mouse-ear cress).